A 493-amino-acid polypeptide reads, in one-letter code: Cytoplasmic tRNA 2-thiolation protein 2 (493 aa).

Position 489 is a phosphoserine (serine 489).

The protein belongs to the CTU2/NCS2 family. Interacts with NCS6 and URM1. May act by forming a heterodimer with NCS6.

Its subcellular location is the cytoplasm. It functions in the pathway tRNA modification; 5-methoxycarbonylmethyl-2-thiouridine-tRNA biosynthesis. Plays a central role in 2-thiolation of mcm(5)S(2)U at tRNA wobble positions of tRNA(Lys), tRNA(Glu) and tRNA(Gln). May act by forming a heterodimer with NCS6 that ligates sulfur from thiocarboxylated URM1 onto the uridine of tRNAs at wobble position. Prior mcm(5) tRNA modification by the elongator complex is required for 2-thiolation. May also be involved in protein urmylation. The polypeptide is Cytoplasmic tRNA 2-thiolation protein 2 (Saccharomyces cerevisiae (strain YJM789) (Baker's yeast)).